Here is a 147-residue protein sequence, read N- to C-terminus: Myoglobin (147 aa).

Residues 2–141 form the Globin domain; sequence ADFDAVLKFW…FIADMDANYK (140 aa). Residue His-60 participates in nitrite binding. Residue His-60 participates in O2 binding. Residue His-89 participates in heme b binding.

Belongs to the globin family. Monomeric.

It is found in the cytoplasm. Its subcellular location is the sarcoplasm. The catalysed reaction is Fe(III)-heme b-[protein] + nitric oxide + H2O = Fe(II)-heme b-[protein] + nitrite + 2 H(+). It catalyses the reaction H2O2 + AH2 = A + 2 H2O. In terms of biological role, monomeric heme protein which primary function is to store oxygen and facilitate its diffusion within muscle tissues. Reversibly binds oxygen through a pentacoordinated heme iron and enables its timely and efficient release as needed during periods of heightened demand. Depending on the oxidative conditions of tissues and cells, and in addition to its ability to bind oxygen, it also has a nitrite reductase activity whereby it regulates the production of bioactive nitric oxide. Under stress conditions, like hypoxia and anoxia, it also protects cells against reactive oxygen species thanks to its pseudoperoxidase activity. This is Myoglobin (mb) from Scomber japonicus (Chub mackerel).